A 978-amino-acid chain; its full sequence is Peroxisomal ATPase PEX6 (978 aa).

The residue at position 119 (Arg119) is an Omega-N-methylarginine. ATP is bound by residues 470–477 (GPPGSGKT) and 742–749 (GPPGTGKT).

This sequence belongs to the AAA ATPase family. As to quaternary structure, interacts with PEX1; forming the PEX1-PEX6 AAA ATPase complex, which is composed of a heterohexamer formed by a trimer of PEX1-PEX6 dimers. Interacts with PEX26; interaction is direct and promotes recruitment to peroxisomal membranes. Interacts with ZFAND6.

It localises to the cytoplasm. Its subcellular location is the cytosol. The protein localises to the peroxisome membrane. It is found in the cell projection. The protein resides in the cilium. It localises to the photoreceptor outer segment. The enzyme catalyses ATP + H2O = ADP + phosphate + H(+). Component of the PEX1-PEX6 AAA ATPase complex, a protein dislocase complex that mediates the ATP-dependent extraction of the PEX5 receptor from peroxisomal membranes, an essential step for PEX5 recycling. Specifically recognizes PEX5 monoubiquitinated at 'Cys-11', and pulls it out of the peroxisome lumen through the PEX2-PEX10-PEX12 retrotranslocation channel. Extraction by the PEX1-PEX6 AAA ATPase complex is accompanied by unfolding of the TPR repeats and release of bound cargo from PEX5. This Rattus norvegicus (Rat) protein is Peroxisomal ATPase PEX6.